The following is a 175-amino-acid chain: Regenerating islet-derived protein 3-gamma (175 aa).

A signal peptide spans 1–26 (MLPPMALPSVSWMLLSCLILLCQVQG). The propeptide occupies 27–37 (EETQKELPSPR). Cystine bridges form between Cys-40–Cys-51, Cys-68–Cys-171, and Cys-146–Cys-163. The C-type lectin domain maps to 47–172 (YGSPCYALFL…CDAKLPYVCK (126 aa)). The sufficient to activate EXTL3 stretch occupies residues 103–118 (WIGLHDPTQGSEPDGD). Zn(2+) is bound at residue His-107. The EPN motif lies at 114-116 (EPD). 2 residues coordinate Zn(2+): Glu-121 and His-145.

Forms a hexameric membrane-permeabilizing oligomeric pore on membrane phospholipids. The hexamer is formed by three dimers related by helical symmetry. Forms filaments, filamentation traps pore complexes and limits damage to host cells. Interacts with EXTL3. In terms of processing, proteolytic processing by trypsin removes an inhibitory N-terminal propeptide and is essential for peptidoglycan binding and antibacterial activity. As to expression, predominantly expressed in pancreas, where it may be restricted to exocrine pancreas. Moderate expression levels in testis and weak in heart, kidney and placenta.

It localises to the secreted. The protein localises to the cytoplasm. With respect to regulation, lipopolysaccharide inhibits pore-forming activity, explaining why is bactericidal for Gram-positive but not Gram-negative bacteria. Bactericidal C-type lectin which acts exclusively against Gram-positive bacteria and mediates bacterial killing by binding to surface-exposed carbohydrate moieties of peptidoglycan. Restricts bacterial colonization of the intestinal epithelial surface and consequently limits activation of adaptive immune responses by the microbiota. Its function is as follows. Acts as a hormone in response to different stimuli like anti-inflammatory signals, such as IL17A, or gut microbiome. Is secreted by different cell types to activate its receptor EXTL3 and induce cell specific signaling pathways. Induced by IL17A in keratinocytes, regulates keratinocyte proliferation and differentiation after skin injury. In parallel, inhibits skin inflammation through the inhibition of inflammatory cytokines such as IL6 and TNF. Induced by IL22 in lung epithelial cells, inhibits cytokine production and regulates allergic airway inflammation. Induced in small intestine by inulin-enriched diet and Lactobacillus gasseri enriched microbiome, plays a role in the improvement of gut barrier function, the regulation of energy balance and glucose levels. Modulates microbiota composition in duodenal contents. Produced by nociceptor in response to endotoxins, prevents endotoxic death by targeting kynurenine pathway in microglia. In terms of biological role, has bacteriostatic activity. Functionally, has bactericidal activity against L.monocytogenes and methicillin-resistant S.aureus. The sequence is that of Regenerating islet-derived protein 3-gamma from Homo sapiens (Human).